Here is a 26-residue protein sequence, read N- to C-terminus: Glycyl-poneratoxin (26 aa).

R25 is modified (arginine amide; in delta-paraponeritoxin-Pc1a).

Post-translationally, the glycine-PoTx is a non-amidated form of poneratoxin, with an extra-Gly at C-terminus. This loss of amidation does not alter toxin activity on Nav1.7/SCN9A. In terms of tissue distribution, expressed by the venom gland.

It is found in the secreted. Its function is as follows. Toxin that causes pain in vertebrates by targeting tetrodotoxin (TTX)-sensitive sodium channels in peripheral sensory neurons. Also blocks synaptic transmission and stimulates smooth muscle contraction. Converts the normally rapidly activating and inactivating sodium channel current into one that does not inactivate. Is active on both Nav1.6/SCN8A and Nav1.7/SCN9A sodium channels, with a much potent activity on Nav1.6/SCN8A (EC(50)=97 nM on human channels) than on Nav1.7/SCN9A (EC(50)=2.3 uM on human and EC(50)=1.8 uM on mouse channels). On these channels, causes a sustained current, a reduction in peak current amplitude and a hyperpolarising shift. Modulates Nav1.7/SCN9A in a non-competitive manner with TTX or tetracaine. Toxin-induced persistant current is very slowly reversible with repeated wash steps over 30 minutes. In vivo, shallow intraplantar injection in mice causes immediate, long-lasting and near-maximal nocifensive behaviors, which decrease with coinjection of TTX. When tested on insects, causes paralysis but not mortality at high doses. This chain is Glycyl-poneratoxin, found in Paraponera clavata (Bullet ant).